Here is a 3094-residue protein sequence, read N- to C-terminus: Replicase polyprotein 1ab (3094 aa).

Catalysis depends on for leader protease activity residues cysteine 509 and histidine 569. Residues 622–647 are a coiled coil; the sequence is ARSVEKDLIDFKDEIKSLSKEKRSVT. Positions 670–857 constitute an Alphavirus-like MT domain; sequence SFTHSVYSDH…HKLSNIKSIM (188 aa). Positions 1807-1816 are enriched in low complexity; sequence DSESVSSDEV. The interval 1807–1828 is disordered; the sequence is DSESVSSDEVASNPRPGLHGGS. The region spanning 2215 to 2387 is the (+)RNA virus helicase ATP-binding domain; it reads TQTNFVSANA…FVDDESRVYG (173 aa). The (+)RNA virus helicase C-terminal domain maps to 2388–2548; it reads EVSYRCPWDV…AYRVYPTSFG (161 aa). In terms of domain architecture, RdRp catalytic spans 2817–2930; sequence YNVGEIDFSK…FSESPIRNSA (114 aa).

Post-translationally, the leader protease is released by autoproteolysis.

The protein resides in the host cytoplasmic vesicle membrane. The enzyme catalyses RNA(n) + a ribonucleoside 5'-triphosphate = RNA(n+1) + diphosphate. The catalysed reaction is ATP + H2O = ADP + phosphate + H(+). Functionally, L-pro is involved in systemic transport and in RNA amplification. RNA-dependent RNA polymerase replicates the viral genome. The protein is Replicase polyprotein 1ab of Beet yellows virus (isolate Ukraine) (BYV).